We begin with the raw amino-acid sequence, 725 residues long: Ribosomal RNA large subunit methyltransferase K/L (725 aa).

Positions 46–157 (VAYRLCLWSR…RGQATLSLDL (112 aa)) constitute a THUMP domain.

Belongs to the methyltransferase superfamily. RlmKL family.

Its subcellular location is the cytoplasm. It catalyses the reaction guanosine(2445) in 23S rRNA + S-adenosyl-L-methionine = N(2)-methylguanosine(2445) in 23S rRNA + S-adenosyl-L-homocysteine + H(+). It carries out the reaction guanosine(2069) in 23S rRNA + S-adenosyl-L-methionine = N(2)-methylguanosine(2069) in 23S rRNA + S-adenosyl-L-homocysteine + H(+). In terms of biological role, specifically methylates the guanine in position 2445 (m2G2445) and the guanine in position 2069 (m7G2069) of 23S rRNA. In Pseudomonas aeruginosa (strain ATCC 15692 / DSM 22644 / CIP 104116 / JCM 14847 / LMG 12228 / 1C / PRS 101 / PAO1), this protein is Ribosomal RNA large subunit methyltransferase K/L.